The sequence spans 200 residues: MLQWLHSCWPFGKYRRQKYVPLDTSSSCPDRWKIEIEIAQPPGVFVGDILQNSDSDASLRQAYLLAVQLNNITDYLKRFDEASVPESCKSVVQTQITKLKSVRNIIWNTMLSMAVGGVTIDDAALKTLLDKRAGESIALIEMEKLATAIVMDDSKAWAKEINNIILSAEHEKQILVNSEVPLIECETLAAEKTTTPAVSI.

A lipid anchor (S-palmitoyl cysteine; by host) is attached at cysteine 8.

The protein belongs to the herpesviridae UL51 family. As to quaternary structure, oligomerizes. Interacts with ORF42; this interaction mediates ORF42 incorporation to virions. In terms of processing, phosphorylated. Post-translationally, palmitoylation is necessary for Golgi localization.

It is found in the virion tegument. Its subcellular location is the host cytoplasm. It localises to the host Golgi apparatus. In terms of biological role, plays several roles during the time course of infection, including egress of virus particles from the perinuclear space and secondary envelopment of cytoplasmic capsids that bud into specific trans-Golgi network (TGN)-derived membranes. The sequence is that of Gene 55 protein (55) from Saimiriine herpesvirus 2 (strain 11) (SaHV-2).